The sequence spans 308 residues: Methionyl-tRNA formyltransferase (308 aa).

Residue 110–113 participates in (6S)-5,6,7,8-tetrahydrofolate binding; that stretch reads SLLP.

This sequence belongs to the Fmt family.

The enzyme catalyses L-methionyl-tRNA(fMet) + (6R)-10-formyltetrahydrofolate = N-formyl-L-methionyl-tRNA(fMet) + (6S)-5,6,7,8-tetrahydrofolate + H(+). Its function is as follows. Attaches a formyl group to the free amino group of methionyl-tRNA(fMet). The formyl group appears to play a dual role in the initiator identity of N-formylmethionyl-tRNA by promoting its recognition by IF2 and preventing the misappropriation of this tRNA by the elongation apparatus. This is Methionyl-tRNA formyltransferase from Neisseria meningitidis serogroup C / serotype 2a (strain ATCC 700532 / DSM 15464 / FAM18).